The sequence spans 541 residues: Anthranilate synthase component 1 (541 aa).

L-tryptophan contacts are provided by residues Ser-61 and 311 to 313; that span reads PYM. Residue 348–349 coordinates chorismate; sequence GT. Residue Glu-381 participates in Mg(2+) binding. Chorismate-binding positions include Tyr-469, Arg-489, 503–505, and Gly-505; that span reads GAG. A Mg(2+)-binding site is contributed by Glu-518.

This sequence belongs to the anthranilate synthase component I family. Heterotetramer consisting of two non-identical subunits: a beta subunit (TrpG) and a large alpha subunit (TrpE). Mg(2+) serves as cofactor.

The catalysed reaction is chorismate + L-glutamine = anthranilate + pyruvate + L-glutamate + H(+). Its pathway is amino-acid biosynthesis; L-tryptophan biosynthesis; L-tryptophan from chorismate: step 1/5. Feedback inhibited by tryptophan. Functionally, part of a heterotetrameric complex that catalyzes the two-step biosynthesis of anthranilate, an intermediate in the biosynthesis of L-tryptophan. In the first step, the glutamine-binding beta subunit (TrpG) of anthranilate synthase (AS) provides the glutamine amidotransferase activity which generates ammonia as a substrate that, along with chorismate, is used in the second step, catalyzed by the large alpha subunit of AS (TrpE) to produce anthranilate. In the absence of TrpG, TrpE can synthesize anthranilate directly from chorismate and high concentrations of ammonia. In Vibrio parahaemolyticus serotype O3:K6 (strain RIMD 2210633), this protein is Anthranilate synthase component 1 (trpE).